A 169-amino-acid chain; its full sequence is Cytochrome c oxidase subunit 4 isoform 1, mitochondrial (169 aa).

The transit peptide at 1-22 directs the protein to the mitochondrion; the sequence is MLASRALSLIGKRAISTSVCLR. Residues 23–99 are Mitochondrial matrix-facing; it reads AHGSVVKSED…FAEMNRGTNE (77 aa). An N6-acetyllysine; alternate modification is found at Lys-29. Residue Lys-29 is modified to N6-succinyllysine; alternate. 2 positions are modified to phosphoserine: Ser-56 and Ser-58. Lys-60 is modified (N6-acetyllysine; alternate). At Lys-60 the chain carries N6-succinyllysine; alternate. Position 67 is an N6-acetyllysine (Lys-67). A helical transmembrane segment spans residues 100–125; it reads WKTVVGMAMFFIGFTALVLIWEKSYV. The Mitochondrial intermembrane portion of the chain corresponds to 126 to 169; the sequence is YGPIPHTFDRDWVAMQTKRMLDMKANPIQGFSAKWDYDKNEWKK.

The protein belongs to the cytochrome c oxidase IV family. As to quaternary structure, component of the cytochrome c oxidase (complex IV, CIV), a multisubunit enzyme composed of 14 subunits. The complex is composed of a catalytic core of 3 subunits MT-CO1, MT-CO2 and MT-CO3, encoded in the mitochondrial DNA, and 11 supernumerary subunits COX4I, COX5A, COX5B, COX6A, COX6B, COX6C, COX7A, COX7B, COX7C, COX8 and NDUFA4, which are encoded in the nuclear genome. The complex exists as a monomer or a dimer and forms supercomplexes (SCs) in the inner mitochondrial membrane with NADH-ubiquinone oxidoreductase (complex I, CI) and ubiquinol-cytochrome c oxidoreductase (cytochrome b-c1 complex, complex III, CIII), resulting in different assemblies (supercomplex SCI(1)III(2)IV(1) and megacomplex MCI(2)III(2)IV(2)). Interacts with PHB2; the interaction decreases in absence of SPHK2. Interacts with AFG1L. Interacts with ABCB7; this interaction allows the regulation of cellular iron homeostasis and cellular reactive oxygen species (ROS) levels in cardiomyocytes. Interacts with FLVCR2; this interaction occurs in the absence of heme and is disrupted upon heme binding. Interacts with IRGC.

It is found in the mitochondrion inner membrane. It functions in the pathway energy metabolism; oxidative phosphorylation. Its function is as follows. Component of the cytochrome c oxidase, the last enzyme in the mitochondrial electron transport chain which drives oxidative phosphorylation. The respiratory chain contains 3 multisubunit complexes succinate dehydrogenase (complex II, CII), ubiquinol-cytochrome c oxidoreductase (cytochrome b-c1 complex, complex III, CIII) and cytochrome c oxidase (complex IV, CIV), that cooperate to transfer electrons derived from NADH and succinate to molecular oxygen, creating an electrochemical gradient over the inner membrane that drives transmembrane transport and the ATP synthase. Cytochrome c oxidase is the component of the respiratory chain that catalyzes the reduction of oxygen to water. Electrons originating from reduced cytochrome c in the intermembrane space (IMS) are transferred via the dinuclear copper A center (CU(A)) of subunit 2 and heme A of subunit 1 to the active site in subunit 1, a binuclear center (BNC) formed by heme A3 and copper B (CU(B)). The BNC reduces molecular oxygen to 2 water molecules using 4 electrons from cytochrome c in the IMS and 4 protons from the mitochondrial matrix. This chain is Cytochrome c oxidase subunit 4 isoform 1, mitochondrial (Cox4i1), found in Mus musculus (Mouse).